The primary structure comprises 217 residues: uncharacterized protein (217 aa).

Positions M1–A32 are cleaved as a signal peptide. The N-palmitoyl cysteine moiety is linked to residue C33. The S-diacylglycerol cysteine moiety is linked to residue C33.

It belongs to the MG067/MG068/MG395 family.

The protein resides in the cell membrane. This is an uncharacterized protein from Mycoplasma pneumoniae (strain ATCC 29342 / M129 / Subtype 1) (Mycoplasmoides pneumoniae).